The chain runs to 637 residues: DNA gyrase subunit B (637 aa).

A Toprim domain is found at 422-536 (CEVYIVEGDS…AGYVYLAMPP (115 aa)). 3 residues coordinate Mg(2+): glutamate 428, aspartate 501, and aspartate 503.

Belongs to the type II topoisomerase GyrB family. As to quaternary structure, heterotetramer, composed of two GyrA and two GyrB chains. In the heterotetramer, GyrA contains the active site tyrosine that forms a transient covalent intermediate with DNA, while GyrB binds cofactors and catalyzes ATP hydrolysis. Mg(2+) is required as a cofactor. The cofactor is Mn(2+). It depends on Ca(2+) as a cofactor.

It localises to the cytoplasm. It catalyses the reaction ATP-dependent breakage, passage and rejoining of double-stranded DNA.. In terms of biological role, a type II topoisomerase that negatively supercoils closed circular double-stranded (ds) DNA in an ATP-dependent manner to modulate DNA topology and maintain chromosomes in an underwound state. Negative supercoiling favors strand separation, and DNA replication, transcription, recombination and repair, all of which involve strand separation. Also able to catalyze the interconversion of other topological isomers of dsDNA rings, including catenanes and knotted rings. Type II topoisomerases break and join 2 DNA strands simultaneously in an ATP-dependent manner. The protein is DNA gyrase subunit B of Treponema pallidum (strain Nichols).